The chain runs to 465 residues: tRNA modification GTPase MnmE (465 aa).

The (6S)-5-formyl-5,6,7,8-tetrahydrofolate site is built by Arg21, Glu85, and Lys124. A TrmE-type G domain is found at 220–387; it reads GVPVAIIGET…LQKMLINAAH (168 aa). Asn230 contributes to the K(+) binding site. GTP contacts are provided by residues 230-235, 249-255, 274-277, and 337-340; these read NAGKST, SDIHGTT, DTAG, and NKAD. Ser234 lines the Mg(2+) pocket. Ser249, Ile251, and Thr254 together coordinate K(+). Thr255 contacts Mg(2+). Residue Lys465 coordinates (6S)-5-formyl-5,6,7,8-tetrahydrofolate.

This sequence belongs to the TRAFAC class TrmE-Era-EngA-EngB-Septin-like GTPase superfamily. TrmE GTPase family. Homodimer. Heterotetramer of two MnmE and two MnmG subunits. K(+) is required as a cofactor.

Its subcellular location is the cytoplasm. Its function is as follows. Exhibits a very high intrinsic GTPase hydrolysis rate. Involved in the addition of a carboxymethylaminomethyl (cmnm) group at the wobble position (U34) of certain tRNAs, forming tRNA-cmnm(5)s(2)U34. The chain is tRNA modification GTPase MnmE from Bacteroides thetaiotaomicron (strain ATCC 29148 / DSM 2079 / JCM 5827 / CCUG 10774 / NCTC 10582 / VPI-5482 / E50).